Reading from the N-terminus, the 252-residue chain is 5'-nucleotidase SurE (252 aa).

A divalent metal cation-binding residues include aspartate 8, aspartate 9, serine 39, and asparagine 91.

This sequence belongs to the SurE nucleotidase family. The cofactor is a divalent metal cation.

The protein localises to the cytoplasm. The enzyme catalyses a ribonucleoside 5'-phosphate + H2O = a ribonucleoside + phosphate. Its function is as follows. Nucleotidase that shows phosphatase activity on nucleoside 5'-monophosphates. The polypeptide is 5'-nucleotidase SurE (Variovorax paradoxus (strain S110)).